The following is a 451-amino-acid chain: Protoheme IX farnesyltransferase, mitochondrial (451 aa).

The next 6 helical transmembrane spans lie at 149 to 169 (TILVMLSAICSYALSPYPATV), 240 to 260 (PTVAALGLSNIALYSWIYTSL), 265 to 285 (IINTWVGALVGAIPPLMGWAA), 289 to 309 (LTHPGSWCLAGLLYAWQFPHF), 339 to 359 (VALRYSLLMFPLCFGLSYFNI), and 414 to 434 (KAFFASVLHLPAVLILAILHK).

Belongs to the UbiA prenyltransferase family.

It is found in the mitochondrion membrane. Converts protoheme IX and farnesyl diphosphate to heme O. The chain is Protoheme IX farnesyltransferase, mitochondrial (COX10) from Candida glabrata (strain ATCC 2001 / BCRC 20586 / JCM 3761 / NBRC 0622 / NRRL Y-65 / CBS 138) (Yeast).